The sequence spans 435 residues: UDP-N-acetylmuramoylalanine--D-glutamate ligase (435 aa).

114–120 (GSNGKST) provides a ligand contact to ATP.

This sequence belongs to the MurCDEF family.

It is found in the cytoplasm. The catalysed reaction is UDP-N-acetyl-alpha-D-muramoyl-L-alanine + D-glutamate + ATP = UDP-N-acetyl-alpha-D-muramoyl-L-alanyl-D-glutamate + ADP + phosphate + H(+). It functions in the pathway cell wall biogenesis; peptidoglycan biosynthesis. Functionally, cell wall formation. Catalyzes the addition of glutamate to the nucleotide precursor UDP-N-acetylmuramoyl-L-alanine (UMA). In Haemophilus ducreyi (strain 35000HP / ATCC 700724), this protein is UDP-N-acetylmuramoylalanine--D-glutamate ligase.